We begin with the raw amino-acid sequence, 368 residues long: DNA-directed RNA polymerase subunit alpha (368 aa).

Residues 1 to 231 (MLWKGFQKPK…DHMNIFINFE (231 aa)) are alpha N-terminal domain (alpha-NTD). The segment at 243-368 (KPEIRNENLN…GFGGDNNPGF (126 aa)) is alpha C-terminal domain (alpha-CTD).

The protein belongs to the RNA polymerase alpha chain family. In terms of assembly, homodimer. The RNAP catalytic core consists of 2 alpha, 1 beta, 1 beta' and 1 omega subunit. When a sigma factor is associated with the core the holoenzyme is formed, which can initiate transcription.

It catalyses the reaction RNA(n) + a ribonucleoside 5'-triphosphate = RNA(n+1) + diphosphate. Its function is as follows. DNA-dependent RNA polymerase catalyzes the transcription of DNA into RNA using the four ribonucleoside triphosphates as substrates. This chain is DNA-directed RNA polymerase subunit alpha, found in Koribacter versatilis (strain Ellin345).